A 423-amino-acid chain; its full sequence is MKSWSTRPLPQLPGNIEAPQLFDSASKTLRALPVAADASLYVCGITPYDATHMGHAATYLAFDLLGRVWRDSGASVNYVQNVTDIDDPLLERADRDGVDWRELAESQIELFRADMTALNVIAPQQYIGAIEAIQWIVPAVEELIAEGFAYRMDSGDVYFDTVAASVKTPDSSNAGELGAWWLGQISGLSPEEMLPVFAERGGDPERDGKRNPLDPLLWRVERAGEPAWPGASLGDGRPGWHIECTVIARKFLPAPFSVQGGGSDLLFPHHEMGDGHAWALDHTPLAKHYAHAGMVGLDGEKMSKSRGNLVLVSALRAEGVDPMAVRLSILANHYRSDWSWTAELLERSKLRLAQWRAAMEHTSVGSAAQLVSEIRTALAADLDAPTALNAVDNWVGQKATTEHSALDAALASDAIEALLGVVL.

Residue Cys43 coordinates Zn(2+). L-cysteinyl-5'-AMP is bound by residues 43–46 (CGIT), Thr58, and 81–83 (NVT). The short motif at 45–55 (ITPYDATHMGH) is the 'HIGH' region element. A 'ERGGDP' region motif is present at residues 199–204 (ERGGDP). Trp240 contacts L-cysteinyl-5'-AMP. Cys244 provides a ligand contact to Zn(2+). 262–264 (GSD) is a binding site for L-cysteinyl-5'-AMP. Zn(2+) is bound at residue His269. Position 295 (Val295) interacts with L-cysteinyl-5'-AMP. Residues 301-305 (KMSKS) carry the 'KMSKS' region motif.

This sequence belongs to the class-I aminoacyl-tRNA synthetase family. MshC subfamily. Monomer. Zn(2+) is required as a cofactor.

The enzyme catalyses 1D-myo-inositol 2-amino-2-deoxy-alpha-D-glucopyranoside + L-cysteine + ATP = 1D-myo-inositol 2-(L-cysteinylamino)-2-deoxy-alpha-D-glucopyranoside + AMP + diphosphate + H(+). In terms of biological role, catalyzes the ATP-dependent condensation of GlcN-Ins and L-cysteine to form L-Cys-GlcN-Ins. The sequence is that of L-cysteine:1D-myo-inositol 2-amino-2-deoxy-alpha-D-glucopyranoside ligase from Renibacterium salmoninarum (strain ATCC 33209 / DSM 20767 / JCM 11484 / NBRC 15589 / NCIMB 2235).